The following is a 238-amino-acid chain: MAVEGGMKCVKFLLYVLLLAFCACAVGLIAVGVGAQLVLSQTITHGATPGSLLPVVIIAVGAFLFLVAFVGCCGTCKENYCLMITFAIFLSLIMLVEVAAAIAGYVFRDKVMSEFNKDFRQQMQNYSTDNQTALILDRMQKDFTCCGAANYTDWATIPGMTRDRVPDSCCVNVTSGCGVKFNVKDIYVEGCVEKIGLWLRKNVLVVAAAALGIAFVEVLGIVFACCLVKSIRSGYEVM.

At 1 to 11 (MAVEGGMKCVK) the chain is on the cytoplasmic side. A helical transmembrane segment spans residues 12–32 (FLLYVLLLAFCACAVGLIAVG). Residues 33–51 (VGAQLVLSQTITHGATPGS) are Extracellular-facing. Residues 52 to 72 (LLPVVIIAVGAFLFLVAFVGC) traverse the membrane as a helical segment. Residues 73 to 81 (CGTCKENYC) are Cytoplasmic-facing. Residues 82–102 (LMITFAIFLSLIMLVEVAAAI) traverse the membrane as a helical segment. The Extracellular portion of the chain corresponds to 103-203 (AGYVFRDKVM…KIGLWLRKNV (101 aa)). N-linked (GlcNAc...) asparagine glycans are attached at residues Asn125, Asn130, Asn150, and Asn172. Residues 204 to 224 (LVVAAAALGIAFVEVLGIVFA) traverse the membrane as a helical segment. The Cytoplasmic segment spans residues 225–238 (CCLVKSIRSGYEVM). The Lysosomal targeting motif signature appears at 234-238 (GYEVM).

It belongs to the tetraspanin (TM4SF) family. Interacts with TIMP1 and ITGB1 and recruits TIMP1 to ITGB1. Interacts with CD9. Identified in a complex with CD9 and ITGB3. Interacts with PMEL. Interacts with KDR/VEGFR2; identified in a complex with ITGB1 and KDR/VEGFR2 and is required to recruit KDR to ITGB1 complexes. Interacts with SYT7. Palmitoylated at a low, basal level in unstimulated platelets. The level of palmitoylation increases when platelets are activated by thrombin (in vitro).

It localises to the cell membrane. It is found in the lysosome membrane. Its subcellular location is the late endosome membrane. The protein resides in the endosome. The protein localises to the multivesicular body. It localises to the melanosome. It is found in the secreted. Its subcellular location is the extracellular exosome. The protein resides in the cell surface. Functionally, functions as a cell surface receptor for TIMP1 and plays a role in the activation of cellular signaling cascades. Plays a role in the activation of ITGB1 and integrin signaling, leading to the activation of AKT, FAK/PTK2 and MAP kinases. Promotes cell survival, reorganization of the actin cytoskeleton, cell adhesion, spreading and migration, via its role in the activation of AKT and FAK/PTK2. Plays a role in VEGFA signaling via its role in regulating the internalization of KDR/VEGFR2. Plays a role in intracellular vesicular transport processes, and is required for normal trafficking of the PMEL luminal domain that is essential for the development and maturation of melanocytes. Plays a role in the adhesion of leukocytes onto endothelial cells via its role in the regulation of SELP trafficking. May play a role in mast cell degranulation in response to Ms4a2/FceRI stimulation, but not in mast cell degranulation in response to other stimuli. This Oryctolagus cuniculus (Rabbit) protein is CD63 antigen (CD63).